Consider the following 878-residue polypeptide: NUT family member 2B (878 aa).

6 disordered regions span residues W273–C324, Q417–I512, L527–P560, P624–R693, L709–E757, and W775–Q878. Pro residues-rich tracts occupy residues P278–Q288 and C427–P444. Residues T476–R487 are compositionally biased toward basic residues. Residues E537–Q551 are compositionally biased toward basic and acidic residues.

It belongs to the NUT family.

The chain is NUT family member 2B (NUTM2B) from Homo sapiens (Human).